Consider the following 162-residue polypeptide: NADH-quinone oxidoreductase subunit I (162 aa).

2 4Fe-4S ferredoxin-type domains span residues 54–83 (RRYE…IESE) and 93–122 (TRYD…ETQI). [4Fe-4S] cluster-binding residues include Cys63, Cys66, Cys69, Cys73, Cys102, Cys105, Cys108, and Cys112.

The protein belongs to the complex I 23 kDa subunit family. As to quaternary structure, NDH-1 is composed of 14 different subunits. Subunits NuoA, H, J, K, L, M, N constitute the membrane sector of the complex. [4Fe-4S] cluster is required as a cofactor.

Its subcellular location is the cell inner membrane. It catalyses the reaction a quinone + NADH + 5 H(+)(in) = a quinol + NAD(+) + 4 H(+)(out). Its function is as follows. NDH-1 shuttles electrons from NADH, via FMN and iron-sulfur (Fe-S) centers, to quinones in the respiratory chain. The immediate electron acceptor for the enzyme in this species is believed to be ubiquinone. Couples the redox reaction to proton translocation (for every two electrons transferred, four hydrogen ions are translocated across the cytoplasmic membrane), and thus conserves the redox energy in a proton gradient. The chain is NADH-quinone oxidoreductase subunit I from Burkholderia cenocepacia (strain HI2424).